Reading from the N-terminus, the 146-residue chain is Small ribosomal subunit protein bS6 (146 aa).

A disordered region spans residues 100-146 (QSAMMRKRDDDDRGDRPDRGDRGRGPRPDRPPRRPRDDAAASDEGGF). The span at 105–138 (RKRDDDDRGDRPDRGDRGRGPRPDRPPRRPRDDA) shows a compositional bias: basic and acidic residues.

This sequence belongs to the bacterial ribosomal protein bS6 family.

In terms of biological role, binds together with bS18 to 16S ribosomal RNA. The sequence is that of Small ribosomal subunit protein bS6 from Methylocella silvestris (strain DSM 15510 / CIP 108128 / LMG 27833 / NCIMB 13906 / BL2).